A 1181-amino-acid chain; its full sequence is Clustered mitochondria protein homolog (1181 aa).

Positions 165–195 are disordered; it reads AKAEALAKNEEVSEDEESEPEDDTPMKQSTQ. Residues 176–187 are compositionally biased toward acidic residues; the sequence is VSEDEESEPEDD. In terms of domain architecture, Clu spans 379 to 622; it reads DMARNQELLS…RLAPVDIAFL (244 aa). Residues 1130 to 1181 form a disordered region; sequence GRLARQAPKPTATHQKEAPKKASKKTKGKGKGKDDKGEKLVAELKKKKAGKR. The segment covering 1150–1159 has biased composition (basic residues); sequence KASKKTKGKG. Positions 1160 to 1173 are enriched in basic and acidic residues; it reads KGKDDKGEKLVAEL.

It belongs to the CLU family. As to quaternary structure, may associate with the eukaryotic translation initiation factor 3 (eIF-3) complex.

The protein resides in the cytoplasm. Functionally, mRNA-binding protein involved in proper cytoplasmic distribution of mitochondria. The sequence is that of Clustered mitochondria protein homolog from Yarrowia lipolytica (strain CLIB 122 / E 150) (Yeast).